The chain runs to 450 residues: Carbamoyl phosphate synthase arginine-specific small chain (450 aa).

Residues Met-1 to Met-29 constitute a mitochondrion transit peptide. The Glutamine amidotransferase type-1 domain maps to His-220–Ser-407. Cys-296 serves as the catalytic Nucleophile. Active-site residues include His-380 and Glu-382.

It belongs to the CarA family. In terms of assembly, heterodimer composed of 2 chains; the small (or glutamine) chain promotes the hydrolysis of glutamine to ammonia, which is used by the large (or ammonia) chain to synthesize carbamoyl phosphate.

It is found in the mitochondrion matrix. It catalyses the reaction hydrogencarbonate + L-glutamine + 2 ATP + H2O = carbamoyl phosphate + L-glutamate + 2 ADP + phosphate + 2 H(+). The catalysed reaction is L-glutamine + H2O = L-glutamate + NH4(+). It participates in amino-acid biosynthesis; L-arginine biosynthesis; carbamoyl phosphate from bicarbonate: step 1/1. Its function is as follows. Small subunit of the arginine-specific carbamoyl phosphate synthase (CPSase). CPSase catalyzes the formation of carbamoyl phosphate from the ammonia moiety of glutamine, carbonate, and phosphate donated by ATP, the first step of the arginine biosynthetic pathway. The small subunit (glutamine amidotransferase) binds and cleaves glutamine to supply the large subunit with the substrate ammonia. This is Carbamoyl phosphate synthase arginine-specific small chain (cpa1) from Aspergillus oryzae (strain ATCC 42149 / RIB 40) (Yellow koji mold).